The sequence spans 292 residues: Phosphatidylglycerol--prolipoprotein diacylglyceryl transferase (292 aa).

4 helical membrane passes run 7-27, 45-65, 83-103, and 116-136; these read IILS…FLRE, FQLR…YVLA, LFWG…IFNW, and IWHG…MIFI. Arg165 is a binding site for a 1,2-diacyl-sn-glycero-3-phospho-(1'-sn-glycerol). Transmembrane regions (helical) follow at residues 204 to 224 and 264 to 284; these read PTFL…YFFV and AAQV…AYII.

It belongs to the Lgt family.

The protein resides in the cell inner membrane. It catalyses the reaction L-cysteinyl-[prolipoprotein] + a 1,2-diacyl-sn-glycero-3-phospho-(1'-sn-glycerol) = an S-1,2-diacyl-sn-glyceryl-L-cysteinyl-[prolipoprotein] + sn-glycerol 1-phosphate + H(+). Its pathway is protein modification; lipoprotein biosynthesis (diacylglyceryl transfer). Catalyzes the transfer of the diacylglyceryl group from phosphatidylglycerol to the sulfhydryl group of the N-terminal cysteine of a prolipoprotein, the first step in the formation of mature lipoproteins. This is Phosphatidylglycerol--prolipoprotein diacylglyceryl transferase from Fervidobacterium nodosum (strain ATCC 35602 / DSM 5306 / Rt17-B1).